A 445-amino-acid chain; its full sequence is 8-amino-7-oxononanoate synthase (445 aa).

A substrate-binding site is contributed by Arg40. 131–132 (GY) contacts pyridoxal 5'-phosphate. Residue His156 participates in substrate binding. The pyridoxal 5'-phosphate site is built by Ser202, His230, and Thr258. Residue Lys261 is modified to N6-(pyridoxal phosphate)lysine. Thr377 lines the substrate pocket. The tract at residues 408-445 (ASEGQTRRDAEQPPRSLRSLPPEGAAASLGAARRETAA) is disordered.

This sequence belongs to the class-II pyridoxal-phosphate-dependent aminotransferase family. BioF subfamily. Homodimer. Pyridoxal 5'-phosphate is required as a cofactor.

It carries out the reaction 6-carboxyhexanoyl-[ACP] + L-alanine + H(+) = (8S)-8-amino-7-oxononanoate + holo-[ACP] + CO2. Its pathway is cofactor biosynthesis; biotin biosynthesis. Catalyzes the decarboxylative condensation of pimeloyl-[acyl-carrier protein] and L-alanine to produce 8-amino-7-oxononanoate (AON), [acyl-carrier protein], and carbon dioxide. The protein is 8-amino-7-oxononanoate synthase of Burkholderia ambifaria (strain MC40-6).